The chain runs to 359 residues: Short chain dehydrogenase resG (359 aa).

NADP(+) contacts are provided by Lys-87, Asp-110, Asn-137, Tyr-237, and Lys-241. Tyr-237 serves as the catalytic Proton donor. Catalysis depends on Lys-241, which acts as the Lowers pKa of active site Tyr.

It belongs to the short-chain dehydrogenases/reductases (SDR) family.

It functions in the pathway antifungal biosynthesis. In terms of biological role, short chain dehydrogenase; part of the gene cluster that mediates the biosynthesis of the tetrahydropyranyl antifungal agent restricticin that acts as an inhibitor of CYP51 and blocks the ergosterol biosynthesis. The highly reducing polyketide synthase resH, the short chain dehydrogenase resG, the cyclase resF, the FAD-dependent monooxygenase resA and the enoylreductase resD are required to generate the first stable intermediate desmethylrestrictinol. ResH with resD biosynthesize the first polyketide chain intermediate that is reduced by resG, followed by epoxidation by resA before 6-endo cyclization via epoxide opening by resF leads to desmethylrestrictinol. The methyltransferase resE then catalyzes the C4 O-methylation of desmethylrestrictinol to produce restrictinol, and the nonribosomal peptide synthetase resC catalyzes the C3 esterification of restrictinol with glycine that leads to restricticin. The protein is Short chain dehydrogenase resG of Aspergillus sclerotiorum.